The sequence spans 245 residues: Gas vesicle protein F (245 aa).

This sequence belongs to the gas vesicle GvpF/GvpL family. Binds GvpA.

Its subcellular location is the gas vesicle. A minor component of the gas vesicle, may be involved in preventing GvpA aggregation during gas vesicle nucleation. Gas vesicles (GV) are hollow, gas filled proteinaceous nanostructures. During planktonic growth they allow positioning of the organism at a favorable depth for light or nutrient acquisition. The chain is Gas vesicle protein F from Dolichospermum flosaquae (Anabaena flos-aquae).